We begin with the raw amino-acid sequence, 493 residues long: MTPPTPLMVLGTSSGAGKSLMTAALCRVLKRRGEQPLPFKGQNMSNNAWVDQSGGEMAYSQALQSWAAGLEPNCAMNPVLLKPQGNSTSEVIHGGESVGMARAETYYQEWFKPGWLAIRQGLEQLRQQHPHGRLVLEGAGSPVEVNLQHRDLTNLRLAQYLRARCLLVADIERGGVFAQLVGTLQLLRPVERPLVKGLLINRFRGRQELFDPGVSWLSDNTGVPVLGVMPWLDELFPPEDSLDLLERRGRKANAELEIAVLRLPSLSNFSDLDPLEAEPSVQLRWVQPGEALGQPDAVVLPGSKQTLRDLKALQASGLARELQRFSAGGGAVLGICGGLQMLGRELLDPDGLEGAAGASAAGLNLLPLQTRFGGSKALRQRQAVAHWPTAESCPIEGFELHRGSTIALEPLQALCQEEGLGWVQGQVAGSYLHGLLENGRWRRQWLNQLRRRKQLPELAEDQGHHSLQREELLDRLADAFEANVDLTPLISDP.

Residues 255–441 form the GATase cobBQ-type domain; the sequence is ELEIAVLRLP…LHGLLENGRW (187 aa). The active-site Nucleophile is the cysteine 336. Histidine 433 is an active-site residue.

The protein belongs to the CobB/CobQ family. CobQ subfamily.

Its pathway is cofactor biosynthesis; adenosylcobalamin biosynthesis. Functionally, catalyzes amidations at positions B, D, E, and G on adenosylcobyrinic A,C-diamide. NH(2) groups are provided by glutamine, and one molecule of ATP is hydrogenolyzed for each amidation. This Synechococcus sp. (strain RCC307) protein is Cobyric acid synthase.